Reading from the N-terminus, the 132-residue chain is Small ribosomal subunit protein uS8 (132 aa).

The protein belongs to the universal ribosomal protein uS8 family. As to quaternary structure, part of the 30S ribosomal subunit. Contacts proteins S5 and S12.

Its function is as follows. One of the primary rRNA binding proteins, it binds directly to 16S rRNA central domain where it helps coordinate assembly of the platform of the 30S subunit. This chain is Small ribosomal subunit protein uS8, found in Lactobacillus johnsonii (strain CNCM I-12250 / La1 / NCC 533).